We begin with the raw amino-acid sequence, 507 residues long: ATP synthase subunit alpha, chloroplastic (507 aa).

Gly170–Thr177 provides a ligand contact to ATP.

It belongs to the ATPase alpha/beta chains family. F-type ATPases have 2 components, CF(1) - the catalytic core - and CF(0) - the membrane proton channel. CF(1) has five subunits: alpha(3), beta(3), gamma(1), delta(1), epsilon(1). CF(0) has four main subunits: a, b, b' and c.

The protein resides in the plastid. The protein localises to the chloroplast thylakoid membrane. It catalyses the reaction ATP + H2O + 4 H(+)(in) = ADP + phosphate + 5 H(+)(out). Functionally, produces ATP from ADP in the presence of a proton gradient across the membrane. The alpha chain is a regulatory subunit. This is ATP synthase subunit alpha, chloroplastic from Cucumis sativus (Cucumber).